A 705-amino-acid polypeptide reads, in one-letter code: Ion-translocating oxidoreductase complex subunit C (705 aa).

2 consecutive 4Fe-4S ferredoxin-type domains span residues 368–397 (MGET…QQLY) and 407–435 (KATA…LVQY). Residues Cys377, Cys380, Cys383, Cys387, Cys416, Cys419, Cys422, and Cys426 each contribute to the [4Fe-4S] cluster site. The segment at 536 to 684 (RARQAENIPA…EPVDPRKAAV (149 aa)) is disordered.

It belongs to the 4Fe4S bacterial-type ferredoxin family. RnfC subfamily. In terms of assembly, the complex is composed of six subunits: RnfA, RnfB, RnfC, RnfD, RnfE and RnfG. Requires [4Fe-4S] cluster as cofactor.

Its subcellular location is the cell inner membrane. Functionally, part of a membrane-bound complex that couples electron transfer with translocation of ions across the membrane. This Citrobacter koseri (strain ATCC BAA-895 / CDC 4225-83 / SGSC4696) protein is Ion-translocating oxidoreductase complex subunit C.